Consider the following 857-residue polypeptide: Bifunctional uridylyltransferase/uridylyl-removing enzyme (857 aa).

Residues 1-322 (MDTTPELLLC…FPSESMVTRE (322 aa)) are uridylyltransferase. The segment at 323–679 (INDRFVERQG…ARISPAGEGL (357 aa)) is uridylyl-removing. One can recognise an HD domain in the interval 441–563 (VDQHILMVVR…VGNGRYLTAL (123 aa)). 2 consecutive ACT domains span residues 680–760 (QVAV…DPTQ) and 788–857 (LLSV…ALAI).

The protein belongs to the GlnD family. Requires Mg(2+) as cofactor.

The catalysed reaction is [protein-PII]-L-tyrosine + UTP = [protein-PII]-uridylyl-L-tyrosine + diphosphate. The enzyme catalyses [protein-PII]-uridylyl-L-tyrosine + H2O = [protein-PII]-L-tyrosine + UMP + H(+). With respect to regulation, uridylyltransferase (UTase) activity is inhibited by glutamine, while glutamine activates uridylyl-removing (UR) activity. In terms of biological role, modifies, by uridylylation and deuridylylation, the PII regulatory proteins (GlnB and homologs), in response to the nitrogen status of the cell that GlnD senses through the glutamine level. Under low glutamine levels, catalyzes the conversion of the PII proteins and UTP to PII-UMP and PPi, while under higher glutamine levels, GlnD hydrolyzes PII-UMP to PII and UMP (deuridylylation). Thus, controls uridylylation state and activity of the PII proteins, and plays an important role in the regulation of nitrogen assimilation and metabolism. This is Bifunctional uridylyltransferase/uridylyl-removing enzyme from Cupriavidus metallidurans (strain ATCC 43123 / DSM 2839 / NBRC 102507 / CH34) (Ralstonia metallidurans).